Reading from the N-terminus, the 222-residue chain is Cytidylate kinase (222 aa).

11–19 (GPSGSGKST) is an ATP binding site.

This sequence belongs to the cytidylate kinase family. Type 1 subfamily.

It localises to the cytoplasm. The catalysed reaction is CMP + ATP = CDP + ADP. It carries out the reaction dCMP + ATP = dCDP + ADP. This is Cytidylate kinase from Ureaplasma urealyticum serovar 10 (strain ATCC 33699 / Western).